A 1269-amino-acid chain; its full sequence is Regulator of nonsense transcripts 2 (1269 aa).

2 disordered regions span residues 1–125 and 143–162; these read MPAE…EKEE and LRSK…FFSR. Residues 57 to 133 are a coiled coil; the sequence is KKRLEEDKRK…EESLQLHQEA (77 aa). Residues 94-132 are sufficient for interaction with UPF1; the sequence is KKKQEEEERKKQEEQAKRQQEEAAAQLKEKEESLQLHQE. The MIF4G 1 domain occupies 168–396; the sequence is KKNTAFVKKL…KGELSEDRHK (229 aa). Disordered regions lie at residues 422–444 and 487–518; these read NMPD…DIFT and KSQN…DLEL. 2 stretches are compositionally biased toward basic and acidic residues: residues 427 to 438 and 487 to 511; these read PQDKPTPEEHGP and KSQN…KEAS. MIF4G domains are found at residues 571 to 755 and 774 to 984; these read QQLP…YCNP and RKLL…LRPK. A sufficient for interaction with UPF3A and UPF3B region spans residues 709–926; sequence GRFLFRSPES…IRLVCTILDT (218 aa). The sufficient for interaction with EIF4A1 and EIF1 stretch occupies residues 755–1269; the sequence is PPPAEKTVRK…LIFKTGGRRR (515 aa). A binds to UPF3B region spans residues 837–857; sequence EDVGIHVVDGVLEDIRLGMEV. The disordered stretch occupies residues 1017-1090; it reads SKDSMTEGEN…KENETDEENA (74 aa). Positions 1025–1073 are enriched in acidic residues; sequence ENLEEDEEEEEGGAETEEQSGNESEVNEPEEEEGSEEEEEGEEEEEENT. Positions 1081 to 1269 are sufficient for interaction with UPF1 C-terminus; the sequence is KENETDEENA…LIFKTGGRRR (189 aa). At Thr-1085 the chain carries Phosphothreonine. Interaction with UPF1 regions lie at residues 1102-1126 and 1164-1204; these read VPCV…QQRS and DTMP…AEQE. The interval 1102–1195 is necessary for interaction with UPF1; sequence VPCVEDEDFI…PMSSQLAANH (94 aa). A disordered region spans residues 1218–1269; the sequence is ERQEQEDYQEMLQSLAQRPAPANTNRERRPRYQHPKGAPNADLIFKTGGRRR.

Found in a post-splicing messenger ribonucleoprotein (mRNP) complex. Associates with the exon junction complex (EJC). Interacts with SMG1, EST1A, UPF3A, UPF3B, EIF4A1 and EIF1. Interacts with UPF1; interaction is promoted by TDRD6. Interacts with DDX4. Localized in male germ cells.

The protein localises to the cytoplasm. Its subcellular location is the perinuclear region. Functionally, involved in nonsense-mediated decay (NMD) of mRNAs containing premature stop codons by associating with the nuclear exon junction complex (EJC). Recruited by UPF3B associated with the EJC core at the cytoplasmic side of the nuclear envelope and the subsequent formation of an UPF1-UPF2-UPF3 surveillance complex (including UPF1 bound to release factors at the stalled ribosome) is believed to activate NMD. In cooperation with UPF3B stimulates both ATPase and RNA helicase activities of UPF1. Binds spliced mRNA. The protein is Regulator of nonsense transcripts 2 of Mus musculus (Mouse).